The sequence spans 752 residues: Palmitoyltransferase AKR1 (752 aa).

Disordered stretches follow at residues 1–21 (MTAE…KSDY) and 49–68 (ASSE…LGSV). Topologically, residues 1 to 318 (MTAEEVDKES…FPLPQYFSAS (318 aa)) are cytoplasmic. Composition is skewed to basic and acidic residues over residues 9 to 21 (ESDP…KSDY) and 51 to 68 (SELK…LGSV). ANK repeat units lie at residues 72-102 (PILE…DLSN), 108-137 (ERVS…EVNF), 142-171 (LDAT…DPNI), 175-208 (QGYN…DVDQ), 212-241 (HQRT…DVKN), and 245-274 (AGFT…DFFQ). A helical membrane pass occupies residues 319–339 (TGKMLTFFLPWVLIPLVFYIF). The Lumenal portion of the chain corresponds to 340-341 (SK). The chain crosses the membrane as a helical span at residues 342-362 (ITFFIALLINTIVLVISGLVL). Over 363 to 380 (SRLVVPSYLLSKRHPILN) the chain is Cytoplasmic. A helical transmembrane segment spans residues 381–401 (SPLLAGILSGTIAIAFFIWFT). Residues 402–412 (KISILTFTEKP) are Lumenal-facing. The helical transmembrane segment at 413–433 (VGNIIMLGFFIGLITLFIGLM) threads the bilayer. Residues 434–509 (KSDPGYIPGT…YNQIGLLNHK (76 aa)) are Cytoplasmic-facing. A DHHC domain is found at 466–516 (HFCVHTWIRIPLRSKYDRDSACLISAFDHFCPWVYNQIGLLNHKLFYMFVV). C496 (S-palmitoyl cysteine intermediate) is an active-site residue. Residues 510 to 530 (LFYMFVVLLEISVWWFLPLMM) traverse the membrane as a helical segment. Residues 531-567 (EYFDELEDYLENRKGKHFGDCHFLGDEDLCFGLHHDT) are Lumenal-facing. Residues 568 to 588 (FNFLLLCWVIFQAFWVLCLIA) form a helical membrane-spanning segment. Over 589-752 (VQTVQMLKGV…TLPNATEELV (164 aa)) the chain is Cytoplasmic.

Belongs to the DHHC palmitoyltransferase family. AKR/ZDHHC17 subfamily.

It is found in the early endosome membrane. The protein resides in the golgi apparatus membrane. The enzyme catalyses L-cysteinyl-[protein] + hexadecanoyl-CoA = S-hexadecanoyl-L-cysteinyl-[protein] + CoA. Its function is as follows. Palmitoyltransferase specific for casein kinase 1. The protein is Palmitoyltransferase AKR1 (AKR1) of Kluyveromyces lactis (strain ATCC 8585 / CBS 2359 / DSM 70799 / NBRC 1267 / NRRL Y-1140 / WM37) (Yeast).